Here is a 337-residue protein sequence, read N- to C-terminus: tRNA N6-adenosine threonylcarbamoyltransferase (337 aa).

Positions 111 and 115 each coordinate Fe cation. Substrate-binding positions include 134 to 138, D167, G180, and N272; that span reads LVSGG. D300 serves as a coordination point for Fe cation.

This sequence belongs to the KAE1 / TsaD family. Requires Fe(2+) as cofactor.

The protein resides in the cytoplasm. It carries out the reaction L-threonylcarbamoyladenylate + adenosine(37) in tRNA = N(6)-L-threonylcarbamoyladenosine(37) in tRNA + AMP + H(+). Its function is as follows. Required for the formation of a threonylcarbamoyl group on adenosine at position 37 (t(6)A37) in tRNAs that read codons beginning with adenine. Is involved in the transfer of the threonylcarbamoyl moiety of threonylcarbamoyl-AMP (TC-AMP) to the N6 group of A37, together with TsaE and TsaB. TsaD likely plays a direct catalytic role in this reaction. This is tRNA N6-adenosine threonylcarbamoyltransferase from Pectobacterium atrosepticum (strain SCRI 1043 / ATCC BAA-672) (Erwinia carotovora subsp. atroseptica).